A 243-amino-acid polypeptide reads, in one-letter code: Amphiregulin (243 aa).

The N-terminal stretch at 1 to 24 is a signal peptide; it reads MRTPSLSLALSVLSLLVLGSGHYA. The propeptide occupies 25 to 96; that stretch reads AGLELNGTSS…IVDDSVRVEQ (72 aa). Asn-30 carries an N-linked (GlcNAc...) asparagine glycan. Residues 55 to 67 show a composition bias toward polar residues; sequence STISEMPSGSELS. Disordered regions lie at residues 55 to 75 and 98 to 135; these read STISEMPSGSELSTGDYDYSE and IKPKENKTEGEKSSEKPKRKKKGGKGGKGRRNRKKKKN. The span at 98-113 shows a compositional bias: basic and acidic residues; the sequence is IKPKENKTEGEKSSEK. The N-linked (GlcNAc...) asparagine glycan is linked to Asn-103. Residues 114–135 show a composition bias toward basic residues; sequence PKRKKKGGKGGKGRRNRKKKKN. The 41-residue stretch at 133 to 173 folds into the EGF-like domain; it reads KKNPCAAKFQNFCIHGECRYIENLEVVTCHCHQDYFGERCG. 3 disulfide bridges follow: Cys-137–Cys-150, Cys-145–Cys-161, and Cys-163–Cys-172. A helical membrane pass occupies residues 190–213; sequence IALAAIIVFVSAVSVAAIGIITAV. Residue Asn-236 is glycosylated (N-linked (GlcNAc...) asparagine).

It belongs to the amphiregulin family. In terms of assembly, the immature precursor interacts with CNIH.

It is found in the membrane. Its function is as follows. Ligand of the EGF receptor/EGFR. Autocrine growth factor as well as a mitogen for a broad range of target cells including astrocytes, Schwann cells and fibroblasts. In Rattus norvegicus (Rat), this protein is Amphiregulin (Areg).